An 84-amino-acid chain; its full sequence is Kunitz-type serine protease inhibitor B6 (84 aa).

The signal sequence occupies residues 1 to 24; it reads MSSGGLLLLLGLLTLWAELTPISS. Residues 31–81 enclose the BPTI/Kunitz inhibitor domain; that stretch reads CNLAPESGRCRGHLRRIYYNLESNKCKVFFYGGCGGNANNFETRDECRQTC. Cystine bridges form between Cys-31–Cys-81, Cys-40–Cys-64, and Cys-56–Cys-77.

This sequence belongs to the venom Kunitz-type family. Expressed by the venom gland.

The protein localises to the secreted. In terms of biological role, serine protease inhibitor that inhibits trypsin. This is Kunitz-type serine protease inhibitor B6 from Daboia siamensis (Eastern Russel's viper).